The following is a 934-amino-acid chain: Rab GTPase-activating protein tbc-11 (934 aa).

A PID domain is found at 16 to 134 (VQYLGCSQLV…SKAETAAKAL (119 aa)). Positions 337–383 (FISLESDSDRKRSKQNLGKSPSRMPTQLLHPTGDDESDCDEPLLSGS) are disordered. Polar residues predominate over residues 351–361 (QNLGKSPSRMP). In terms of domain architecture, Rab-GAP TBC spans 422 to 612 (GIPDKLRGRV…FILDLFLSQG (191 aa)). Coiled coils occupy residues 727–800 (KIEL…YKKL) and 861–895 (LEEREDHIKNLEIDLAQTKLSLVEAECRNQDLTHQ).

In terms of biological role, rab GTPase activating protein for the small GTPases rab-6.1 and rab-6.2. Probably acts through rab-6.1 and rab-6.2 to play a role in microRNA-mediated gene silencing in different tissue types. Required for seam cell division and alae formation. In Caenorhabditis elegans, this protein is Rab GTPase-activating protein tbc-11.